The following is a 401-amino-acid chain: Enolase (401 aa).

Residue Gln154 coordinates (2R)-2-phosphoglycerate. The active-site Proton donor is the Glu196. 3 residues coordinate Mg(2+): Asp232, Glu275, and Asp302. (2R)-2-phosphoglycerate-binding residues include Lys327, Arg356, Ser357, and Lys378. Lys327 functions as the Proton acceptor in the catalytic mechanism.

Belongs to the enolase family. Mg(2+) serves as cofactor.

It is found in the cytoplasm. It localises to the secreted. Its subcellular location is the cell surface. It carries out the reaction (2R)-2-phosphoglycerate = phosphoenolpyruvate + H2O. It functions in the pathway carbohydrate degradation; glycolysis; pyruvate from D-glyceraldehyde 3-phosphate: step 4/5. Functionally, catalyzes the reversible conversion of 2-phosphoglycerate (2-PG) into phosphoenolpyruvate (PEP). It is essential for the degradation of carbohydrates via glycolysis. This Haloquadratum walsbyi (strain DSM 16790 / HBSQ001) protein is Enolase.